Consider the following 932-residue polypeptide: Probable serine/threonine-protein kinase clkA (932 aa).

Residues 1 to 10 (MDRFQTKRKT) show a composition bias toward basic residues. Disordered stretches follow at residues 1–21 (MDRF…NNDY), 39–198 (YKNN…YGDT), and 212–562 (NDYD…TNTN). Low complexity-rich tracts occupy residues 11 to 21 (YSYNGYSNNDY) and 39 to 123 (YKNN…ENNY). A compositionally biased stretch (polar residues) spans 124–143 (FQSENQSNKDQNSYFNSSYL). 4 stretches are compositionally biased toward low complexity: residues 148 to 196 (DNYN…NSYG), 218 to 305 (NNNN…NGGN), 314 to 342 (VFNN…NNDY), and 351 to 562 (NIYS…TNTN). Residues 590 to 920 (YKVLCTVGSG…ASDALSHPFL (331 aa)) enclose the Protein kinase domain. Residues 596–604 (VGSGTFSTV) and K619 each bind ATP. Residue D719 is the Proton acceptor of the active site.

It belongs to the protein kinase superfamily. CMGC Ser/Thr protein kinase family.

The catalysed reaction is L-seryl-[protein] + ATP = O-phospho-L-seryl-[protein] + ADP + H(+). It catalyses the reaction L-threonyl-[protein] + ATP = O-phospho-L-threonyl-[protein] + ADP + H(+). This Dictyostelium discoideum (Social amoeba) protein is Probable serine/threonine-protein kinase clkA (clkA).